The following is a 316-amino-acid chain: Transcription factor MafB (316 aa).

2 disordered regions span residues 40-78 (PDRAIRPCNRLQPTGSVSSTPISTPCSSVPSSPSFSPTE) and 116-204 (HQMP…EDRF). Residues 55-77 (SVSSTPISTPCSSVPSSPSFSPT) show a composition bias toward low complexity. Basic residues-rich tracts occupy residues 130–144 (GHHHHHHNNHHHQNH) and 160–172 (QHPHHHHHHHHHQ). Residues 177 to 198 (PSGSSSSSQQLQNSHQQHQNSS) are compositionally biased toward low complexity. Residues 231 to 256 (RLKQKRRTLKNRGYAQSCRFKRVQQK) form a basic motif region. A bZIP domain is found at 231–294 (RLKQKRRTLK…DAYKIKCEKL (64 aa)). The interval 259–280 (LENEKTQLIQQVEQLKLEVSRL) is leucine-zipper.

It belongs to the bZIP family. Maf subfamily. As to quaternary structure, homodimer or heterodimer with other bHLH-Zip transcription factors. Binds DNA as a homodimer or a heterodimer.

It localises to the nucleus. Its function is as follows. Acts as a transcriptional activator or repressor. Implicated in the regulation of cell-type specific gene expression and play a role in inductive events during lens development. The polypeptide is Transcription factor MafB (mafb) (Xenopus tropicalis (Western clawed frog)).